The primary structure comprises 120 residues: Aspartate 1-decarboxylase (120 aa).

The active-site Schiff-base intermediate with substrate; via pyruvic acid is the Ser25. Residue Ser25 is modified to Pyruvic acid (Ser). Thr57 contributes to the substrate binding site. The active-site Proton donor is the Tyr58. Substrate is bound at residue 73-75 (GAA).

It belongs to the PanD family. Heterooctamer of four alpha and four beta subunits. Pyruvate is required as a cofactor. Is synthesized initially as an inactive proenzyme, which is activated by self-cleavage at a specific serine bond to produce a beta-subunit with a hydroxyl group at its C-terminus and an alpha-subunit with a pyruvoyl group at its N-terminus.

It is found in the cytoplasm. It carries out the reaction L-aspartate + H(+) = beta-alanine + CO2. It participates in cofactor biosynthesis; (R)-pantothenate biosynthesis; beta-alanine from L-aspartate: step 1/1. Catalyzes the pyruvoyl-dependent decarboxylation of aspartate to produce beta-alanine. This Methylibium petroleiphilum (strain ATCC BAA-1232 / LMG 22953 / PM1) protein is Aspartate 1-decarboxylase.